The following is an 863-amino-acid chain: ATP-dependent helicase Lhr-Core protein 2 (863 aa).

ATP is bound by residues phenylalanine 30, glutamine 37, lysine 60, threonine 61, aspartate 179, glutamate 180, arginine 377, and histidine 380. Residues 41 to 234 (VIEIHKGENV…FVFGFNDDGT (194 aa)) form the Helicase ATP-binding domain. Residues 179-182 (DEVH) carry the DEAH box motif. The Helicase C-terminal domain occupies 275-424 (RLDELIEQHR…RIKIPQNPLD (150 aa)). The WH domain stretch occupies residues 418-512 (IPQNPLDVLV…AIYYMNTGTI (95 aa)). A domain 4 region spans residues 513–863 (PDEAKIEVYT…KIMAMIGELE (351 aa)).

This sequence belongs to the Lhr helicase family. Lhr-Core subfamily. In terms of assembly, monomer.

The catalysed reaction is ATP + H2O = ADP + phosphate + H(+). Its activity is regulated as follows. Unwinding of dsRNA duplexes is inhibited by AMP-PMP and ATP-gamma-S. A DNA:RNA helicase with a significant strand annealing activity, probably involved in DNA repair and RNA transactions. In vitro has a slow helicase activity with a preference for 3'-overhang duplexes; displaces RNA from 3'-overhang DNA:RNA or RNA:RNA duplexes. 3'-tailed double-stranded (ds)DNA is not unwound. The slow helicase activity on RNA duplexes is ATP-independent. Has strand annealing properties in the absence of ATP; forms 3'-overhang DNA:RNA, 3'-overhang dsRNA and 3'-overhang dsDNA duplexes but not 5'-overhang duplexes. A nucleic acid-dependent ATPase; single-stranded (ss)DNA and RNA are equally stimulatory. Binds ssDNA, RNA, dsDNA and dsRNA duplexes. The polypeptide is ATP-dependent helicase Lhr-Core protein 2 (Thermococcus barophilus (strain DSM 11836 / MP)).